The sequence spans 119 residues: Holo-[acyl-carrier-protein] synthase (119 aa).

Residues Asp7 and Glu53 each coordinate Mg(2+).

It belongs to the P-Pant transferase superfamily. AcpS family. Requires Mg(2+) as cofactor.

Its subcellular location is the cytoplasm. It carries out the reaction apo-[ACP] + CoA = holo-[ACP] + adenosine 3',5'-bisphosphate + H(+). Transfers the 4'-phosphopantetheine moiety from coenzyme A to a Ser of acyl-carrier-protein. This is Holo-[acyl-carrier-protein] synthase from Dehalococcoides mccartyi (strain ATCC BAA-2266 / KCTC 15142 / 195) (Dehalococcoides ethenogenes (strain 195)).